A 689-amino-acid polypeptide reads, in one-letter code: DNA topoisomerase 1 (689 aa).

The 111-residue stretch at 3 to 113 (DNLVIVESPA…KENRVVFNEI (111 aa)) folds into the Toprim domain. 2 residues coordinate Mg(2+): E9 and D82. The Topo IA-type catalytic domain maps to 129 to 557 (EMNLVDAQQA…FFSSFKQDVE (429 aa)). An interaction with DNA region spans residues 163–168 (SAGRVQ). Y298 functions as the O-(5'-phospho-DNA)-tyrosine intermediate in the catalytic mechanism. Residues 328 to 357 (SKRKASGKQGDQDAHEAIRPSSTMRTPDDM) form a disordered region. 3 C4-type zinc fingers span residues 577–603 (CEVC…FPDC), 617–645 (CPKC…YPEC), and 658–681 (CPKC…CSNC).

It belongs to the type IA topoisomerase family. As to quaternary structure, monomer. It depends on Mg(2+) as a cofactor.

The enzyme catalyses ATP-independent breakage of single-stranded DNA, followed by passage and rejoining.. Releases the supercoiling and torsional tension of DNA, which is introduced during the DNA replication and transcription, by transiently cleaving and rejoining one strand of the DNA duplex. Introduces a single-strand break via transesterification at a target site in duplex DNA. The scissile phosphodiester is attacked by the catalytic tyrosine of the enzyme, resulting in the formation of a DNA-(5'-phosphotyrosyl)-enzyme intermediate and the expulsion of a 3'-OH DNA strand. The free DNA strand then undergoes passage around the unbroken strand, thus removing DNA supercoils. Finally, in the religation step, the DNA 3'-OH attacks the covalent intermediate to expel the active-site tyrosine and restore the DNA phosphodiester backbone. The polypeptide is DNA topoisomerase 1 (Staphylococcus aureus).